A 325-amino-acid chain; its full sequence is MLLAPGDVIKRSSEELKQRQIQINLVDWTESEGGKEDKTEPKEESKAEGSKDGEGTQSESGQKEEGGKETKDADVDRRIHTAVGSGSSTKGPGERANENADRGDGKVGGGGGDADAGVGATGTNGRRWVVLTEEIARAIESKYGTKIDVYRDEVPAQIIEVERSLQKELGISREGVAEQTERLRDLRRKEKNGTHAKAVERGGRKQRKESHGDAQREGVEEEKTSEEPARIGITIEGVMSQKKLLSMIGGVERKMAPIGARESAVMLVSNSIKDVMRATAYFTAPTGDPHWKEVAREASKKKNILAYTSTGGDAKTEFLRLFDHL.

Disordered stretches follow at residues 1-126 (MLLA…TNGR) and 175-231 (GVAE…PARI). Basic and acidic residues-rich tracts occupy residues 8 to 18 (VIKRSSEELKQ), 32 to 54 (EGGK…KDGE), 61 to 79 (GQKE…DRRI), and 92 to 105 (PGER…RGDG). Lys-106 provides a ligand contact to ATP. The span at 106 to 122 (KVGGGGGDADAGVGATG) shows a compositional bias: gly residues. Residues 175–229 (GVAEQTERLRDLRRKEKNGTHAKAVERGGRKQRKESHGDAQREGVEEEKTSEEPA) show a composition bias toward basic and acidic residues.

This sequence belongs to the orbivirus VP6 family. In terms of assembly, homohexamer.

The protein localises to the virion. The enzyme catalyses ATP + H2O = ADP + phosphate + H(+). Its function is as follows. ATP dependent RNA helicase essential for RNA packaging and viral transcription. Possesses ss- and dsRNA-binding capacity. In Bluetongue virus 11 (isolate USA) (BTV 11), this protein is Helicase VP6-A (Segment-9).